We begin with the raw amino-acid sequence, 437 residues long: tRNA wybutosine-synthesizing protein 2 homolog (437 aa).

Residues Ser208, Lys215, Glu255, and 283 to 284 (DN) each bind S-adenosyl-L-methionine. Polar residues predominate over residues 331–344 (SFSGKNPQPPGSSN). A disordered region spans residues 331-374 (SFSGKNPQPPGSSNMEKKHWPHPQKITTDKQGNRTTGSCMGEMS).

This sequence belongs to the class I-like SAM-binding methyltransferase superfamily. TRM5/TYW2 family.

The enzyme catalyses 4-demethylwyosine(37) in tRNA(Phe) + S-adenosyl-L-methionine = 4-demethyl-7-[(3S)-3-amino-3-carboxypropyl]wyosine(37) in tRNA(Phe) + S-methyl-5'-thioadenosine + H(+). Its pathway is tRNA modification; wybutosine-tRNA(Phe) biosynthesis. S-adenosyl-L-methionine-dependent transferase that acts as a component of the wybutosine biosynthesis pathway. Wybutosine is a hyper modified guanosine with a tricyclic base found at the 3'-position adjacent to the anticodon of eukaryotic phenylalanine tRNA. Catalyzes the transfer of the alpha-amino-alpha-carboxypropyl (acp) group from S-adenosyl-L-methionine to the C-7 position of 4-demethylwyosine (imG-14) to produce wybutosine-86. This Rattus norvegicus (Rat) protein is tRNA wybutosine-synthesizing protein 2 homolog (Trmt12).